The chain runs to 360 residues: MNLLDLDRQALKRLFADLGEKPFRATQVLKWVHQRRVTGFEEMTDISKALRARLAERVALRLPEVLAEQVSEDGTRKWLLRVDGGQAIETVFIPDSGRGTLCVSSQVGCALDCSFCSTAQQGFNRNLSTAEIIGQYYVAYDQLTGTGEQITNVVFMGMGEPLLNLEAVIPAVRLMTDDDAYGLSKRKVTISTSGVVTMLERMREQTDVSLAVSLHAPNNALRDELVPINRKHPLERLIPACAAYIADKPHRRITWEYVMLDGVNDQDHHAHELARLLGDIPSKVNLIPFNPFPGARYRCSPRGRILRFVRILQSHGLTATTRVTRGQDIDGACGQLVGKVQDRTRRQQRLVQRELRREGR.

The active-site Proton acceptor is glutamate 89. The Radical SAM core domain occupies aspartate 95 to aspartate 330. Cysteines 102 and 333 form a disulfide. Cysteine 109, cysteine 113, and cysteine 116 together coordinate [4Fe-4S] cluster. S-adenosyl-L-methionine-binding positions include glycine 159–glutamate 160, serine 191, serine 213–histidine 215, and asparagine 290. Cysteine 333 serves as the catalytic S-methylcysteine intermediate.

Belongs to the radical SAM superfamily. RlmN family. Requires [4Fe-4S] cluster as cofactor.

Its subcellular location is the cytoplasm. The enzyme catalyses adenosine(2503) in 23S rRNA + 2 reduced [2Fe-2S]-[ferredoxin] + 2 S-adenosyl-L-methionine = 2-methyladenosine(2503) in 23S rRNA + 5'-deoxyadenosine + L-methionine + 2 oxidized [2Fe-2S]-[ferredoxin] + S-adenosyl-L-homocysteine. It catalyses the reaction adenosine(37) in tRNA + 2 reduced [2Fe-2S]-[ferredoxin] + 2 S-adenosyl-L-methionine = 2-methyladenosine(37) in tRNA + 5'-deoxyadenosine + L-methionine + 2 oxidized [2Fe-2S]-[ferredoxin] + S-adenosyl-L-homocysteine. Functionally, specifically methylates position 2 of adenine 2503 in 23S rRNA and position 2 of adenine 37 in tRNAs. m2A2503 modification seems to play a crucial role in the proofreading step occurring at the peptidyl transferase center and thus would serve to optimize ribosomal fidelity. The polypeptide is Dual-specificity RNA methyltransferase RlmN (Alkalilimnicola ehrlichii (strain ATCC BAA-1101 / DSM 17681 / MLHE-1)).